The chain runs to 823 residues: DNA ligase (823 aa).

Residues Asp-32–Asp-36, Ser-81–Leu-82, and Glu-121 each bind NAD(+). The N6-AMP-lysine intermediate role is filled by Lys-123. NAD(+) is bound by residues Arg-144, Glu-181, Lys-299, and Lys-323. Residues Cys-449, Cys-452, Cys-467, and Cys-473 each contribute to the Zn(2+) site. Residues Glu-528–Lys-558 are disordered. The BRCT domain occupies Gly-746–Cys-823.

The protein belongs to the NAD-dependent DNA ligase family. LigA subfamily. Mg(2+) is required as a cofactor. The cofactor is Mn(2+).

The catalysed reaction is NAD(+) + (deoxyribonucleotide)n-3'-hydroxyl + 5'-phospho-(deoxyribonucleotide)m = (deoxyribonucleotide)n+m + AMP + beta-nicotinamide D-nucleotide.. DNA ligase that catalyzes the formation of phosphodiester linkages between 5'-phosphoryl and 3'-hydroxyl groups in double-stranded DNA using NAD as a coenzyme and as the energy source for the reaction. It is essential for DNA replication and repair of damaged DNA. This Neisseria gonorrhoeae (strain NCCP11945) protein is DNA ligase.